A 132-amino-acid polypeptide reads, in one-letter code: Small ribosomal subunit protein uS8c (132 aa).

Belongs to the universal ribosomal protein uS8 family. In terms of assembly, part of the 30S ribosomal subunit.

The protein localises to the plastid. Its subcellular location is the chloroplast. Functionally, one of the primary rRNA binding proteins, it binds directly to 16S rRNA central domain where it helps coordinate assembly of the platform of the 30S subunit. The protein is Small ribosomal subunit protein uS8c (rps8) of Nymphaea alba (White water-lily).